The chain runs to 451 residues: Glucose-6-phosphate isomerase (451 aa).

Position 38 is a phosphothreonine (threonine 38). Residue glutamate 290 is the Proton donor of the active site. Catalysis depends on residues histidine 311 and lysine 425.

It belongs to the GPI family.

Its subcellular location is the cytoplasm. It carries out the reaction alpha-D-glucose 6-phosphate = beta-D-fructose 6-phosphate. The protein operates within carbohydrate biosynthesis; gluconeogenesis. It participates in carbohydrate degradation; glycolysis; D-glyceraldehyde 3-phosphate and glycerone phosphate from D-glucose: step 2/4. Functionally, catalyzes the reversible isomerization of glucose-6-phosphate to fructose-6-phosphate. The chain is Glucose-6-phosphate isomerase from Shouchella clausii (strain KSM-K16) (Alkalihalobacillus clausii).